Consider the following 633-residue polypeptide: tRNA uridine 5-carboxymethylaminomethyl modification enzyme MnmG (633 aa).

Residues 15–20 (GAGHAG), V127, and S182 contribute to the FAD site. Residue 276-290 (GPRYCPSIEDKIVRF) participates in NAD(+) binding. Q373 contacts FAD.

Belongs to the MnmG family. In terms of assembly, homodimer. Heterotetramer of two MnmE and two MnmG subunits. FAD is required as a cofactor.

The protein localises to the cytoplasm. NAD-binding protein involved in the addition of a carboxymethylaminomethyl (cmnm) group at the wobble position (U34) of certain tRNAs, forming tRNA-cmnm(5)s(2)U34. This is tRNA uridine 5-carboxymethylaminomethyl modification enzyme MnmG from Streptococcus thermophilus (strain CNRZ 1066).